A 245-amino-acid polypeptide reads, in one-letter code: Protein crossbronx (245 aa).

The UBC core domain maps to 20–177 (HQEYKILAEY…VQESIAESKA (158 aa)).

It belongs to the ubiquitin-conjugating enzyme family. FTS subfamily.

This is Protein crossbronx (cbx) from Drosophila mojavensis (Fruit fly).